Reading from the N-terminus, the 153-residue chain is Nucleoside diphosphate kinase (153 aa).

ATP-binding residues include Lys12, Phe60, Arg88, Thr94, Arg105, and Asn115. His118 acts as the Pros-phosphohistidine intermediate in catalysis.

Belongs to the NDK family. It depends on Mg(2+) as a cofactor.

The protein localises to the cytoplasm. It carries out the reaction a 2'-deoxyribonucleoside 5'-diphosphate + ATP = a 2'-deoxyribonucleoside 5'-triphosphate + ADP. It catalyses the reaction a ribonucleoside 5'-diphosphate + ATP = a ribonucleoside 5'-triphosphate + ADP. Major role in the synthesis of nucleoside triphosphates other than ATP. The ATP gamma phosphate is transferred to the NDP beta phosphate via a ping-pong mechanism, using a phosphorylated active-site intermediate. This Natronomonas pharaonis (strain ATCC 35678 / DSM 2160 / CIP 103997 / JCM 8858 / NBRC 14720 / NCIMB 2260 / Gabara) (Halobacterium pharaonis) protein is Nucleoside diphosphate kinase.